The primary structure comprises 665 residues: Ion-translocating oxidoreductase complex subunit C (665 aa).

4Fe-4S ferredoxin-type domains lie at 368 to 398 and 408 to 437; these read EYAEPEAEQACIRCSSCSDACPVNLMPQQLY and KSEEYALKDCIECGICAYVCPSHIPLIQYF. [4Fe-4S] cluster contacts are provided by Cys-378, Cys-381, Cys-384, Cys-388, Cys-417, Cys-420, Cys-423, and Cys-427. 2 stretches are compositionally biased toward basic and acidic residues: residues 465–477 and 485–513; these read QARMEREEQERKA and ARREELAQTKGEDPVKAALERLKAKKANE. 3 disordered regions span residues 465 to 568, 580 to 623, and 637 to 665; these read QARM…DAKK, AKKL…LDPK, and KKLAQANSTSEAISNSQTAENEVEKQIVR. 2 stretches are compositionally biased toward polar residues: residues 554–564 and 585–600; these read VENQEQQTQPT and QTNSTSEAISNSQTAE. Positions 602 to 615 are enriched in basic and acidic residues; it reads EVEKTKSAVEKTEE. Residues 643–656 are compositionally biased toward polar residues; sequence NSTSEAISNSQTAE.

The protein belongs to the 4Fe4S bacterial-type ferredoxin family. RnfC subfamily. As to quaternary structure, the complex is composed of six subunits: RnfA, RnfB, RnfC, RnfD, RnfE and RnfG. Requires [4Fe-4S] cluster as cofactor.

The protein resides in the cell inner membrane. Functionally, part of a membrane-bound complex that couples electron transfer with translocation of ions across the membrane. The polypeptide is Ion-translocating oxidoreductase complex subunit C (Haemophilus influenzae (strain 86-028NP)).